Here is a 154-residue protein sequence, read N- to C-terminus: Peptide methionine sulfoxide reductase MsrB (154 aa).

In terms of domain architecture, MsrB spans 28-150 (DQQWREQLSE…NSVSLIFNKI (123 aa)). 4 residues coordinate Zn(2+): cysteine 67, cysteine 70, cysteine 116, and cysteine 119. Cysteine 139 (nucleophile) is an active-site residue.

It belongs to the MsrB Met sulfoxide reductase family. The cofactor is Zn(2+).

The enzyme catalyses L-methionyl-[protein] + [thioredoxin]-disulfide + H2O = L-methionyl-(R)-S-oxide-[protein] + [thioredoxin]-dithiol. The protein is Peptide methionine sulfoxide reductase MsrB of Vibrio vulnificus (strain YJ016).